Reading from the N-terminus, the 319-residue chain is MSDYQVLLYYKYTTIDDPETFAKEHLAACKEMELKGRILVATEGINGTVSGTVEATNKYMDYMANDARFADMVFKIDAADAHAFKKMHVRPRAEIVSLSLEEDVNPLEVTGTYLEPSEFREALLDEDTVILDARNDYEFDIGHFRGAVRPDIQNFRELPGWIEDNREQLADKKIVTYCTGGIRCEKFSGWLKTAGFDDVSQLHGGIATYGKNEETKGELWDGQMYVFDERIAVPINQVNPTIVGKDYFDGTPCERYINCANPYCNKQILASVENEKKYLRSCSHDCRVHPANLYTKNLSKEEFTERLQAINESSPEMVQ.

The region spanning 124–218 (LDEDTVILDA…YGKNEETKGE (95 aa)) is the Rhodanese domain. Cys178 functions as the Cysteine persulfide intermediate in the catalytic mechanism.

The protein belongs to the TrhO family.

The enzyme catalyses uridine(34) in tRNA + AH2 + O2 = 5-hydroxyuridine(34) in tRNA + A + H2O. Catalyzes oxygen-dependent 5-hydroxyuridine (ho5U) modification at position 34 in tRNAs. This chain is tRNA uridine(34) hydroxylase, found in Listeria monocytogenes serovar 1/2a (strain ATCC BAA-679 / EGD-e).